Reading from the N-terminus, the 445-residue chain is MVRMEDIISLAKRKGFVFQSSEVYGGLSGAWDYGPLGVELKKNIKSEWWKSMVYLHENIVGLDSAIFMRPEIWRASGHIDGFSDSMVDCKDCKSRFRADFIDLSKNCPNCKVGNNFTSPRSFNLMFKTHIGVVEDSSSEIYLRPETAQGIFVNFRNVLDSSRLKIPFGIAQVGKAFRNEIVTKNFIFRTCEFEQMEMQFFVHPKQIDEWFCYWQQNRMNFFIETLKIRPDKLRFKAHDSTQLAHYAKSAFDIEYEFPFGFQEVEGIHNRGNYDLTQHSKFSNNPKIFEYHDLLTKERYVPHVIETSAGLTRSVLMTLCNAYSEEELSDGDKRIVLRLHPKLAPYKIAIFPLVKKVELVEIARRIYIELCDDFHIFYDDSGTIGKRYRRQDEIGTPYCVTVDYSTIEDETVTVRERNNMTQKRIFINDLYSYIKTEILNYKEDFNK.

Substrate contacts are provided by arginine 97 and glutamate 145. ATP contacts are provided by residues 177–179 (RNE), 187–192 (FRTCEF), 262–263 (EV), and 308–311 (GLTR). 192–196 (FEQME) contributes to the substrate binding site. 304-308 (ETSAG) provides a ligand contact to substrate.

It belongs to the class-II aminoacyl-tRNA synthetase family. Homodimer.

It is found in the cytoplasm. The catalysed reaction is tRNA(Gly) + glycine + ATP = glycyl-tRNA(Gly) + AMP + diphosphate. In terms of biological role, catalyzes the attachment of glycine to tRNA(Gly). The protein is Glycine--tRNA ligase of Borrelia garinii subsp. bavariensis (strain ATCC BAA-2496 / DSM 23469 / PBi) (Borreliella bavariensis).